The chain runs to 139 residues: Inactive palmitoleoyl-protein carboxylesterase notum1b (139 aa).

This sequence belongs to the pectinacetylesterase family. Notum subfamily.

Functionally, probable inactive palmitoleoyl-protein carboxylesterase. The protein is Inactive palmitoleoyl-protein carboxylesterase notum1b of Danio rerio (Zebrafish).